The following is a 279-amino-acid chain: Acyl-coenzyme A thioesterase MBLAC2 (279 aa).

S2 carries the N-acetylserine modification. 7 residues coordinate Zn(2+): H83, H85, D87, H88, H170, D189, and H231. C254 is lipidated: S-palmitoyl cysteine.

Belongs to the metallo-beta-lactamase superfamily. Glyoxalase II family. Requires Zn(2+) as cofactor. In terms of processing, palmitoylated on Cys-254 by ZDHHC20.

Its subcellular location is the endoplasmic reticulum membrane. The protein resides in the cell membrane. It carries out the reaction hexadecanoyl-CoA + H2O = hexadecanoate + CoA + H(+). The enzyme catalyses dodecanoyl-CoA + H2O = dodecanoate + CoA + H(+). The catalysed reaction is tetradecanoyl-CoA + H2O = tetradecanoate + CoA + H(+). It catalyses the reaction octadecanoyl-CoA + H2O = octadecanoate + CoA + H(+). It carries out the reaction a beta-lactam + H2O = a substituted beta-amino acid. Its function is as follows. Acyl-CoA thioesterases are a group of enzymes that catalyze the hydrolysis of acyl-CoAs to the free fatty acid and coenzyme A (CoASH), providing the potential to regulate intracellular levels of acyl-CoAs, free fatty acids and CoASH. Has an acyl-CoA thioesterase activity towards the long chain fatty acyl-CoA thioester palmitoyl-CoA (hexadecanoyl-CoA; C16:0-CoA). Displays a substrate preference for fatty acyl-CoAs with chain-lengths C12-C18. The chain is Acyl-coenzyme A thioesterase MBLAC2 (MBLAC2) from Bos taurus (Bovine).